The following is a 276-amino-acid chain: 2,3,4,5-tetrahydropyridine-2,6-dicarboxylate N-succinyltransferase (276 aa).

Positions 104 and 141 each coordinate substrate.

The protein belongs to the transferase hexapeptide repeat family. Homotrimer.

It localises to the cytoplasm. The catalysed reaction is (S)-2,3,4,5-tetrahydrodipicolinate + succinyl-CoA + H2O = (S)-2-succinylamino-6-oxoheptanedioate + CoA. The protein operates within amino-acid biosynthesis; L-lysine biosynthesis via DAP pathway; LL-2,6-diaminopimelate from (S)-tetrahydrodipicolinate (succinylase route): step 1/3. This is 2,3,4,5-tetrahydropyridine-2,6-dicarboxylate N-succinyltransferase from Pseudoalteromonas translucida (strain TAC 125).